Consider the following 263-residue polypeptide: Small ribosomal subunit protein eS4 (263 aa).

Positions Leu42 to Asp104 constitute an S4 RNA-binding domain.

The protein belongs to the eukaryotic ribosomal protein eS4 family.

The chain is Small ribosomal subunit protein eS4 (RpS4) from Spodoptera frugiperda (Fall armyworm).